Here is a 131-residue protein sequence, read N- to C-terminus: MAKNKFHDGPGPSQRQLRVGEVIRRTLSEVLARGDVHDPDLNRMSITVGEVRTSPDLKIATAYVLPLGGRGQEDVVQLLSRNKGELRRMIGKKLGLKFTPDLRFRLDETFDRLDDTRRMFDQDAVRRDLDE.

The protein belongs to the RbfA family. As to quaternary structure, monomer. Binds 30S ribosomal subunits, but not 50S ribosomal subunits or 70S ribosomes.

The protein resides in the cytoplasm. Functionally, one of several proteins that assist in the late maturation steps of the functional core of the 30S ribosomal subunit. Associates with free 30S ribosomal subunits (but not with 30S subunits that are part of 70S ribosomes or polysomes). Required for efficient processing of 16S rRNA. May interact with the 5'-terminal helix region of 16S rRNA. The chain is Ribosome-binding factor A from Ruegeria pomeroyi (strain ATCC 700808 / DSM 15171 / DSS-3) (Silicibacter pomeroyi).